A 434-amino-acid chain; its full sequence is dTDP-D-glucose 4,6-dehydratase (434 aa).

Threonine 134 lines the substrate pocket. Catalysis depends on aspartate 135, which acts as the Proton donor. Residues glutamate 136 and tyrosine 169 each act as proton acceptor in the active site. Positions 286 to 309 (NNNNNNNNNNNNNNNNNNNNNNNN) are enriched in low complexity. The segment at 286 to 310 (NNNNNNNNNNNNNNNNNNNNNNNND) is disordered.

It belongs to the NAD(P)-dependent epimerase/dehydratase family. dTDP-glucose dehydratase subfamily. NAD(+) is required as a cofactor.

It catalyses the reaction dTDP-alpha-D-glucose = dTDP-4-dehydro-6-deoxy-alpha-D-glucose + H2O. The sequence is that of dTDP-D-glucose 4,6-dehydratase (tgds) from Dictyostelium discoideum (Social amoeba).